Here is a 238-residue protein sequence, read N- to C-terminus: Orotidine 5'-phosphate decarboxylase (238 aa).

Residues aspartate 10, lysine 32, 59–68 (DLKLHDIPNT), threonine 122, arginine 184, glutamine 193, glycine 213, and arginine 214 each bind substrate. The Proton donor role is filled by lysine 61.

Belongs to the OMP decarboxylase family. Type 1 subfamily. Homodimer.

It catalyses the reaction orotidine 5'-phosphate + H(+) = UMP + CO2. It participates in pyrimidine metabolism; UMP biosynthesis via de novo pathway; UMP from orotate: step 2/2. Catalyzes the decarboxylation of orotidine 5'-monophosphate (OMP) to uridine 5'-monophosphate (UMP). The polypeptide is Orotidine 5'-phosphate decarboxylase (Bacillus anthracis (strain A0248)).